A 701-amino-acid chain; its full sequence is Protein SOSEKI 1 (701 aa).

Positions 8–101 (LSAQVLYQLS…YVLRASELID (94 aa)) are DIX-like oligomerization domain. 4 disordered regions span residues 238 to 262 (STVHGVHTPPSPSLKSSTELPFSPG), 300 to 329 (LPPNTHSTHEDNSFWRDSRSKSPSPSSLNE), 366 to 389 (PYNTCEGASTKIPESKHNSPYRTK), and 538 to 575 (IASSKPLPPGFHKGTNDTKPVQITPRRTPRNSIPLASP). Over residues 306-319 (STHEDNSFWRDSRS) the composition is skewed to basic and acidic residues. Residues 658 to 687 (ILQECSICRRTFKPDSLQVHMRGCHPPQYA) form a C2HC/C3H-type zinc finger. Zn(2+)-binding residues include Cys-662, Cys-665, His-677, and Cys-681.

This sequence belongs to the SOSEKI family. In terms of assembly, homodimer. Forms long polymer filaments with other SOKs proteins polymers crucial for polar localization and biological activity. Zn(2+) is required as a cofactor.

The protein localises to the cell membrane. SOSEKI proteins locally interpret global polarity cues and can influence cell division orientation to coordinate cell polarization relative to body axes. This chain is Protein SOSEKI 1, found in Physcomitrium patens (Spreading-leaved earth moss).